Here is a 936-residue protein sequence, read N- to C-terminus: Isoleucine--tRNA ligase (936 aa).

Positions 58-68 (PYANGRAHLGT) match the 'HIGH' region motif. E561 contributes to the L-isoleucyl-5'-AMP binding site. The 'KMSKS' region motif lies at 602–606 (KMSKS). An ATP-binding site is contributed by K605. Residues C899, C902, C919, and C922 each coordinate Zn(2+).

It belongs to the class-I aminoacyl-tRNA synthetase family. IleS type 1 subfamily. Monomer. It depends on Zn(2+) as a cofactor.

The protein resides in the cytoplasm. It carries out the reaction tRNA(Ile) + L-isoleucine + ATP = L-isoleucyl-tRNA(Ile) + AMP + diphosphate. In terms of biological role, catalyzes the attachment of isoleucine to tRNA(Ile). As IleRS can inadvertently accommodate and process structurally similar amino acids such as valine, to avoid such errors it has two additional distinct tRNA(Ile)-dependent editing activities. One activity is designated as 'pretransfer' editing and involves the hydrolysis of activated Val-AMP. The other activity is designated 'posttransfer' editing and involves deacylation of mischarged Val-tRNA(Ile). This Coxiella burnetii (strain CbuK_Q154) (Coxiella burnetii (strain Q154)) protein is Isoleucine--tRNA ligase.